We begin with the raw amino-acid sequence, 279 residues long: Urease accessory protein UreD (279 aa).

The protein belongs to the UreD family. In terms of assembly, ureD, UreF and UreG form a complex that acts as a GTP-hydrolysis-dependent molecular chaperone, activating the urease apoprotein by helping to assemble the nickel containing metallocenter of UreC. The UreE protein probably delivers the nickel.

Its subcellular location is the cytoplasm. Functionally, required for maturation of urease via the functional incorporation of the urease nickel metallocenter. In Streptococcus thermophilus (strain ATCC BAA-250 / LMG 18311), this protein is Urease accessory protein UreD.